The chain runs to 426 residues: Enolase (426 aa).

Q163 contacts (2R)-2-phosphoglycerate. E205 acts as the Proton donor in catalysis. Positions 242, 283, and 310 each coordinate Mg(2+). K335, R364, S365, and K386 together coordinate (2R)-2-phosphoglycerate. Residue K335 is the Proton acceptor of the active site.

Belongs to the enolase family. The cofactor is Mg(2+).

It is found in the cytoplasm. It localises to the secreted. The protein localises to the cell surface. The catalysed reaction is (2R)-2-phosphoglycerate = phosphoenolpyruvate + H2O. Its pathway is carbohydrate degradation; glycolysis; pyruvate from D-glyceraldehyde 3-phosphate: step 4/5. Its function is as follows. Catalyzes the reversible conversion of 2-phosphoglycerate (2-PG) into phosphoenolpyruvate (PEP). It is essential for the degradation of carbohydrates via glycolysis. This is Enolase from Aquifex aeolicus (strain VF5).